Reading from the N-terminus, the 366-residue chain is Flagellar P-ring protein (366 aa).

The first 27 residues, 1 to 27 (MKSKYSIFCMFLLRGFIFLGTVFSLNS), serve as a signal peptide directing secretion.

The protein belongs to the FlgI family. The basal body constitutes a major portion of the flagellar organelle and consists of four rings (L,P,S, and M) mounted on a central rod.

It is found in the periplasm. The protein localises to the bacterial flagellum basal body. In terms of biological role, assembles around the rod to form the L-ring and probably protects the motor/basal body from shearing forces during rotation. The sequence is that of Flagellar P-ring protein from Leptospira interrogans serogroup Icterohaemorrhagiae serovar copenhageni (strain Fiocruz L1-130).